A 689-amino-acid polypeptide reads, in one-letter code: Glycine--tRNA ligase beta subunit (689 aa).

The protein belongs to the class-II aminoacyl-tRNA synthetase family. Tetramer of two alpha and two beta subunits.

The protein localises to the cytoplasm. The enzyme catalyses tRNA(Gly) + glycine + ATP = glycyl-tRNA(Gly) + AMP + diphosphate. This Salmonella arizonae (strain ATCC BAA-731 / CDC346-86 / RSK2980) protein is Glycine--tRNA ligase beta subunit.